The primary structure comprises 440 residues: Cell division protein FtsA (440 aa).

The protein belongs to the FtsA/MreB family. Self-interacts. Interacts with FtsZ.

The protein localises to the cell membrane. In terms of biological role, cell division protein that is involved in the assembly of the Z ring. May serve as a membrane anchor for the Z ring. This is Cell division protein FtsA from Enterococcus faecalis (strain ATCC 700802 / V583).